The following is a 352-amino-acid chain: rRNA 2'-O-methyltransferase fibrillarin (352 aa).

A disordered region spans residues 1–115 (MGRPEFNRGG…GGAGGMRGGK (115 aa)). An asymmetric dimethylarginine mark is found at Arg-8, Arg-16, Arg-19, Arg-23, Arg-27, Arg-35, Arg-43, Arg-51, Arg-55, Arg-58, Arg-63, Arg-67, Arg-70, Arg-75, Arg-81, Arg-85, Arg-91, Arg-95, Arg-98, Arg-102, Arg-105, and Arg-112. Residues 8 to 18 (RGGGGGGFRGG) are compositionally biased toward gly residues. Over residues 26–59 (SRGGFGGGGRGGYGGGDRGSFGGGDRGGFRGGRG) the composition is skewed to gly residues. The span at 66–113 (FRGGRGGGDRGGFGGRGSPRGGFGGRGSPRGGRGSPRGGRGGAGGMRG) shows a compositional bias: gly residues. Residues 203-204 (TT), 222-223 (EF), 247-248 (DA), and 267-270 (DVAQ) each bind S-adenosyl-L-methionine.

Belongs to the methyltransferase superfamily. Fibrillarin family. As to quaternary structure, component of box C/D small nucleolar ribonucleoprotein (snoRNP) particles. It is associated with the U3, U8 and U13 small nuclear RNAs. Post-translationally, by homology to other fibrillarins, some or all of the N-terminal domain arginines are modified to asymmetric dimethylarginine (DMA).

The protein localises to the nucleus. The protein resides in the nucleolus. It is found in the nucleoplasm. It carries out the reaction L-glutaminyl-[histone H2A] + S-adenosyl-L-methionine = N(5)-methyl-L-glutaminyl-[histone H2A] + S-adenosyl-L-homocysteine + H(+). Functionally, S-adenosyl-L-methionine-dependent methyltransferase that has the ability to methylate both RNAs and proteins. Involved in pre-rRNA processing. Utilizes the methyl donor S-adenosyl-L-methionine to catalyze the site-specific 2'-hydroxyl methylation of ribose moieties in pre-ribosomal RNA. Site specificity is provided by a guide RNA that base pairs with the substrate. Methylation occurs at a characteristic distance from the sequence involved in base pairing with the guide RNA. Also acts as a protein methyltransferase by mediating methylation of 'Gln-105' of histone H2A (H2AQ105me), a modification that impairs binding of the FACT complex and is specifically present at 35S ribosomal DNA locus. Plays a role in modulation of nucleolus size most likely through regulating the ribosomal RNA (rRNA) pool. In Caenorhabditis elegans, this protein is rRNA 2'-O-methyltransferase fibrillarin.